The primary structure comprises 442 residues: Ribosomal protein uS12 methylthiotransferase RimO (442 aa).

The 117-residue stretch at 13 to 129 (RSIFLLSLGC…ILNILGTAYD (117 aa)) folds into the MTTase N-terminal domain. [4Fe-4S] cluster contacts are provided by C22, C58, C92, C153, C157, and C160. One can recognise a Radical SAM core domain in the interval 139–369 (LSPSHYAWLK…MELQEGISEK (231 aa)). The region spanning 372–439 (RALEEKALKV…AYELVGRIKN (68 aa)) is the TRAM domain.

Belongs to the methylthiotransferase family. RimO subfamily. It depends on [4Fe-4S] cluster as a cofactor.

Its subcellular location is the cytoplasm. The enzyme catalyses L-aspartate(89)-[ribosomal protein uS12]-hydrogen + (sulfur carrier)-SH + AH2 + 2 S-adenosyl-L-methionine = 3-methylsulfanyl-L-aspartate(89)-[ribosomal protein uS12]-hydrogen + (sulfur carrier)-H + 5'-deoxyadenosine + L-methionine + A + S-adenosyl-L-homocysteine + 2 H(+). Its function is as follows. Catalyzes the methylthiolation of an aspartic acid residue of ribosomal protein uS12. The sequence is that of Ribosomal protein uS12 methylthiotransferase RimO from Chlorobium phaeobacteroides (strain BS1).